A 514-amino-acid polypeptide reads, in one-letter code: Na(+)/H(+) antiporter NhaB (514 aa).

Helical transmembrane passes span 21-41 (LAIV…SPFI), 43-63 (GWLL…CYPL), 88-108 (IMAN…IFFM), 143-163 (FLDA…FYGV), 203-223 (LMMH…VGEP), 239-259 (FFLR…LTCF), 304-324 (ALIA…VGLI), 349-369 (QESL…AVII), 390-410 (LALF…VFVA), 448-468 (ATPN…SPLI), and 484-504 (IVLS…ATIW).

Belongs to the NhaB Na(+)/H(+) (TC 2.A.34) antiporter family.

It localises to the cell inner membrane. It catalyses the reaction 2 Na(+)(in) + 3 H(+)(out) = 2 Na(+)(out) + 3 H(+)(in). In terms of biological role, na(+)/H(+) antiporter that extrudes sodium in exchange for external protons. The chain is Na(+)/H(+) antiporter NhaB from Haemophilus influenzae (strain 86-028NP).